Here is a 412-residue protein sequence, read N- to C-terminus: 8-amino-7-oxononanoate synthase (412 aa).

Arginine 28 is a substrate binding site. 115 to 116 provides a ligand contact to pyridoxal 5'-phosphate; that stretch reads GY. Histidine 140 contacts substrate. Residues serine 186, histidine 214, and threonine 246 each contribute to the pyridoxal 5'-phosphate site. Lysine 249 is subject to N6-(pyridoxal phosphate)lysine. Threonine 367 contacts substrate.

This sequence belongs to the class-II pyridoxal-phosphate-dependent aminotransferase family. BioF subfamily. As to quaternary structure, homodimer. Pyridoxal 5'-phosphate is required as a cofactor.

The enzyme catalyses 6-carboxyhexanoyl-[ACP] + L-alanine + H(+) = (8S)-8-amino-7-oxononanoate + holo-[ACP] + CO2. The protein operates within cofactor biosynthesis; biotin biosynthesis. In terms of biological role, catalyzes the decarboxylative condensation of pimeloyl-[acyl-carrier protein] and L-alanine to produce 8-amino-7-oxononanoate (AON), [acyl-carrier protein], and carbon dioxide. The protein is 8-amino-7-oxononanoate synthase of Paracidovorax citrulli (strain AAC00-1) (Acidovorax citrulli).